A 493-amino-acid chain; its full sequence is Xaa-Pro dipeptidase (493 aa).

Ala2 bears the N-acetylalanine mark. The residue at position 167 (Ser167) is a Phosphoserine. Position 255 (His255) interacts with a dipeptide. Residues Asp276, Asp287, and His370 each contribute to the Mn(2+) site. An a dipeptide-binding site is contributed by Asp287. A dipeptide-binding residues include His377 and Arg398. Mn(2+) contacts are provided by Glu412 and Glu452.

This sequence belongs to the peptidase M24B family. Eukaryotic-type prolidase subfamily. As to quaternary structure, homodimer. Mn(2+) is required as a cofactor.

The enzyme catalyses Xaa-L-Pro dipeptide + H2O = an L-alpha-amino acid + L-proline. Specifically inhibited by the pseudodipeptide CQ31. Inhibition by CQ31 indirectly activates the CARD8 inflammasome: dipeptide accumulation following PEPD inactivation weaky inhibit dipeptidyl peptidases DDP8 and DPP9, relieving DPP8- and/or DPP9-mediated inhibition of CARD8. Its function is as follows. Dipeptidase that catalyzes the hydrolysis of dipeptides with a prolyl (Xaa-Pro) or hydroxyprolyl residue in the C-terminal position. The preferred dipeptide substrate is Gly-Pro, but other Xaa-Pro dipeptides, such as Ala-Pro, Met-Pro, Phe-Pro, Val-Pro and Leu-Pro, can be cleaved. Plays an important role in collagen metabolism because the high level of iminoacids in collagen. The sequence is that of Xaa-Pro dipeptidase from Homo sapiens (Human).